Here is a 209-residue protein sequence, read N- to C-terminus: Small ribosomal subunit protein uS3 (209 aa).

The 70-residue stretch at 38–107 (IRKFIKNKYY…RVVINIEEIK (70 aa)) folds into the KH type-2 domain.

This sequence belongs to the universal ribosomal protein uS3 family. As to quaternary structure, part of the 30S ribosomal subunit. Forms a tight complex with proteins S10 and S14.

Binds the lower part of the 30S subunit head. Binds mRNA in the 70S ribosome, positioning it for translation. This Thermotoga sp. (strain RQ2) protein is Small ribosomal subunit protein uS3.